The primary structure comprises 99 residues: uncharacterized protein (99 aa).

This is an uncharacterized protein from Lepidoptera (butterflies and moths).